The sequence spans 474 residues: Trehalose-6-phosphate synthase (474 aa).

Arginine 10 contributes to the D-glucose 6-phosphate binding site. 22–23 (GG) is a binding site for UDP-alpha-D-glucose. Positions 77 and 131 each coordinate D-glucose 6-phosphate. Residues arginine 263 and lysine 268 each contribute to the UDP-alpha-D-glucose site. Residue arginine 301 participates in D-glucose 6-phosphate binding. Residues phenylalanine 340 and 366-370 (LVAKE) contribute to the UDP-alpha-D-glucose site.

Belongs to the glycosyltransferase 20 family. In terms of assembly, homotetramer.

It catalyses the reaction D-glucose 6-phosphate + UDP-alpha-D-glucose = alpha,alpha-trehalose 6-phosphate + UDP + H(+). It participates in glycan biosynthesis; trehalose biosynthesis. Its function is as follows. Probably involved in the osmoprotection via the biosynthesis of trehalose. Catalyzes the transfer of glucose from UDP-alpha-D-glucose (UDP-Glc) to D-glucose 6-phosphate (Glc-6-P) to form trehalose-6-phosphate. Acts with retention of the anomeric configuration of the UDP-sugar donor. In Escherichia coli O6:K15:H31 (strain 536 / UPEC), this protein is Trehalose-6-phosphate synthase.